The primary structure comprises 277 residues: Bis(5'-nucleosyl)-tetraphosphatase, symmetrical (277 aa).

This sequence belongs to the Ap4A hydrolase family.

The catalysed reaction is P(1),P(4)-bis(5'-adenosyl) tetraphosphate + H2O = 2 ADP + 2 H(+). Hydrolyzes diadenosine 5',5'''-P1,P4-tetraphosphate to yield ADP. The chain is Bis(5'-nucleosyl)-tetraphosphatase, symmetrical from Azotobacter vinelandii (strain DJ / ATCC BAA-1303).